The chain runs to 255 residues: uncharacterized protein (255 aa).

An HTH deoR-type domain is found at 4–59 (RNERLNLIRKRVDQYGQVAVKDLAIFLQVTPETVRKDLETLENDKLITRTHGGAIQ). Positions 21–40 (VAVKDLAIFLQVTPETVRKD) form a DNA-binding region, H-T-H motif.

This is an uncharacterized protein from Staphylococcus epidermidis (strain ATCC 12228 / FDA PCI 1200).